A 123-amino-acid polypeptide reads, in one-letter code: Large ribosomal subunit protein bL12 (123 aa).

It belongs to the bacterial ribosomal protein bL12 family. In terms of assembly, homodimer. Part of the ribosomal stalk of the 50S ribosomal subunit. Forms a multimeric L10(L12)X complex, where L10 forms an elongated spine to which 2 to 4 L12 dimers bind in a sequential fashion. Binds GTP-bound translation factors.

Functionally, forms part of the ribosomal stalk which helps the ribosome interact with GTP-bound translation factors. Is thus essential for accurate translation. This is Large ribosomal subunit protein bL12 from Ectopseudomonas mendocina (strain ymp) (Pseudomonas mendocina).